The primary structure comprises 445 residues: Arginine biosynthesis bifunctional protein ArgJ, mitochondrial (445 aa).

Residues Thr-189, Lys-215, Thr-226, Glu-312, Asn-440, and Ser-445 each contribute to the substrate site. The Nucleophile role is filled by Thr-226.

The protein belongs to the ArgJ family. As to quaternary structure, heterodimer of an alpha and a beta chain. In terms of processing, the alpha and beta chains are autoproteolytically processed from a single precursor protein within the mitochondrion.

It is found in the mitochondrion matrix. The enzyme catalyses N(2)-acetyl-L-ornithine + L-glutamate = N-acetyl-L-glutamate + L-ornithine. The catalysed reaction is L-glutamate + acetyl-CoA = N-acetyl-L-glutamate + CoA + H(+). Its pathway is amino-acid biosynthesis; L-arginine biosynthesis; L-ornithine and N-acetyl-L-glutamate from L-glutamate and N(2)-acetyl-L-ornithine (cyclic): step 1/1. It functions in the pathway amino-acid biosynthesis; L-arginine biosynthesis; N(2)-acetyl-L-ornithine from L-glutamate: step 1/4. In terms of biological role, catalyzes two activities which are involved in the cyclic version of arginine biosynthesis: the synthesis of acetylglutamate from glutamate and acetyl-CoA, and of ornithine by transacetylation between acetylornithine and glutamate. This chain is Arginine biosynthesis bifunctional protein ArgJ, mitochondrial, found in Schizosaccharomyces pombe (strain 972 / ATCC 24843) (Fission yeast).